We begin with the raw amino-acid sequence, 319 residues long: Triacylglycerol lipase (319 aa).

In terms of domain architecture, AB hydrolase-1 spans 10 to 288 (PVILVHGLAG…TSYHWNHLDE (279 aa)). Residue L17 coordinates substrate. Catalysis depends on S87, which acts as the Nucleophile. Q88 contacts substrate. The cysteines at positions 190 and 269 are disulfide-linked. Ca(2+) is bound at residue D241. Catalysis depends on charge relay system residues D263 and H285. Residues D287, Q291, and V295 each coordinate Ca(2+).

Belongs to the AB hydrolase superfamily. Pseudomonas lipase family. As to quaternary structure, monomer. Interacts with lipase-specific foldase Lif. Ca(2+) is required as a cofactor.

It is found in the secreted. It carries out the reaction a triacylglycerol + H2O = a diacylglycerol + a fatty acid + H(+). Functionally, catalyzes the hydrolysis of triacylglycerol. The sequence is that of Triacylglycerol lipase from Pseudarthrobacter phenanthrenivorans (Arthrobacter phenanthrenivorans).